The primary structure comprises 752 residues: Glutamate carboxypeptidase 2 (752 aa).

At 1–19 (MWNAQQDSDSAEALGRRQR) the chain is on the cytoplasmic side. The residue at position 10 (S10) is a Phosphoserine. The helical; Signal-anchor for type II membrane protein transmembrane segment at 20 to 44 (WFCAGTLVLAFTGTFIIGFLFGWFI) threads the bilayer. Over 45–752 (KPSNDSTSSV…AAAETLREVD (708 aa)) the chain is Extracellular. N-linked (GlcNAc...) asparagine glycosylation is found at N48, N78, N123, N155, and N197. Substrate-binding residues include R212 and N259. The Ca(2+) site is built by T271 and Y274. Positions 276–589 (ANEYAYRHEF…QVRGAMVFEL (314 aa)) are NAALADase. N338 carries an N-linked (GlcNAc...) asparagine glycan. 2 residues coordinate Zn(2+): H379 and D389. E426 provides a ligand contact to substrate. E426 acts as the Nucleophile; for NAALADase activity in catalysis. Zn(2+) is bound at residue E427. E435 and E438 together coordinate Ca(2+). Position 455 (D455) interacts with Zn(2+). N-linked (GlcNAc...) asparagine glycosylation is found at N461 and N478. Substrate contacts are provided by residues 519-520 (SG), N521, 536-538 (RAR), Y554, and 554-555 (YH). Position 555 (H555) interacts with Zn(2+). N615 carries N-linked (GlcNAc...) asparagine glycosylation. The Charge relay system role is filled by S630. The N-linked (GlcNAc...) asparagine glycan is linked to N640. Active-site charge relay system residues include D668 and H691. 701 to 702 (KY) is a binding site for substrate.

This sequence belongs to the peptidase M28 family. M28B subfamily. As to quaternary structure, homodimer. Zn(2+) serves as cofactor. As to expression, widely expressed throughout brain regions with highest levels in the hippocampus, dentate gyrus, priform cortex, choroid plexus of ventricles, pineal gland, anterior lobe of the pituitary gland and supraoptic nucleus. High levels also found in the cerebral cortex, substantia nigra, pontine nucleus and the granule cell layer of cerebellum. Highly expressed in astrocytes and non-myelinating Schwann cells. Also expressed in kidney, localizing to the proximal brush border of the renal tube.

It localises to the cell membrane. It carries out the reaction Release of an unsubstituted, C-terminal glutamyl residue, typically from Ac-Asp-Glu or folylpoly-gamma-glutamates.. Its activity is regulated as follows. The NAALADase activity is inhibited by beta-NAAG, quisqualic acid and 2-(phosphonomethyl)glutaric acid (PMG). In terms of biological role, has both folate hydrolase and N-acetylated-alpha-linked-acidic dipeptidase (NAALADase) activity. Has a preference for tri-alpha-glutamate peptides. In the intestine, required for the uptake of folate. In the brain, modulates excitatory neurotransmission through the hydrolysis of the neuropeptide, N-aceylaspartylglutamate (NAAG), thereby releasing glutamate. Functionally, also exhibits a dipeptidyl-peptidase IV type activity. In vitro, cleaves Gly-Pro-AMC. This Rattus norvegicus (Rat) protein is Glutamate carboxypeptidase 2 (Folh1).